The primary structure comprises 91 residues: uncharacterized protein (91 aa).

The first 20 residues, 1 to 20 (MFSRVLALLAVLLLSANTWA), serve as a signal peptide directing secretion.

This sequence belongs to the BhsA/McbA family.

Its subcellular location is the periplasm. This is an uncharacterized protein from Escherichia coli O157:H7.